A 72-amino-acid polypeptide reads, in one-letter code: Defensin 3 (72 aa).

The first 25 residues, 1-25 (MEKKMAGFCIFFLVLFLAQEYGVEG), serve as a signal peptide directing secretion. 3 disulfide bridges follow: Cys-28-Cys-72, Cys-39-Cys-60, and Cys-45-Cys-66.

It belongs to the DEFL family. In terms of assembly, may form dimers. In terms of processing, not glycosylated. Has 4 disulfide bonds.

Functionally, probably has antifungal activity. In Arachis hypogaea (Peanut), this protein is Defensin 3.